A 181-amino-acid polypeptide reads, in one-letter code: ADP-ribosylation factor 1 (181 aa).

At Gly-2 the chain carries N-acetylglycine; alternate. Gly-2 carries the N-myristoyl glycine; alternate lipid modification. Positions 3–16 (NIFANLFKGLFGKK) are important for the stable binding to the membranes. Residues 24 to 32 (GLDAAGKTT), 126 to 129 (NKQD), and Ala-160 contribute to the GTP site.

This sequence belongs to the small GTPase superfamily. Arf family. Interacts (when activated) with GGA1, GGA2 and GGA3; the interaction is required for proper subcellular location of GGA1, GGA2 and GGA3. Interacts with ARHGAP21, ASAP2, GGA1, HERC1, PRKCABP, PIP5K1B, TMED2, PSCD2, TMED10 and GRIA2. Interacts with ARFGAP1, which hydrolyzes GTP and thus, regulates its function. Interacts with PI4KB in the Golgi complex. Interacts with NCS1/FREQ in the Golgi and at the plasma membrane. Interacts with PLEKHA3. Interacts with PLEKHA8; the interaction, together with phosphatidylinositol 4-phosphate binding, is required for FAPP2-mediated glucosylceramide transfer activity. Interacts (activated) with PICK1 (via PDZ domain); the interaction blocks Arp2/3 complex inhibition. Interacts with IQSEC1. Interacts with C9orf72.

It is found in the golgi apparatus membrane. It localises to the synapse. The protein localises to the synaptosome. The protein resides in the postsynaptic density. The catalysed reaction is GTP + H2O = GDP + phosphate + H(+). With respect to regulation, alternates between an inactive GDP-bound form and an active GTP-bound form. Activated by guanine nucleotide-exchange factors (GEFs) and inactivated by GTPase-activating proteins (GAPs). Small GTPase involved in protein trafficking between different compartments. Modulates vesicle budding and uncoating within the Golgi complex. In its GTP-bound form, triggers the recruitment of coatomer proteins to the Golgi membrane. The hydrolysis of ARF1-bound GTP, which is mediated by ARFGAPs proteins, is required for dissociation of coat proteins from Golgi membranes and vesicles. The GTP-bound form interacts with PICK1 to limit PICK1-mediated inhibition of Arp2/3 complex activity; the function is linked to AMPA receptor (AMPAR) trafficking, regulation of synaptic plasticity of excitatory synapses and spine shrinkage during long-term depression (LTD). Plays a key role in the regulation of intestinal stem cells and gut microbiota, and is essential for maintaining intestinal homeostasis. Also plays a critical role in mast cell expansion but not in mast cell maturation by facilitating optimal mTORC1 activation. The protein is ADP-ribosylation factor 1 (ARF1) of Bos taurus (Bovine).